The chain runs to 85 residues: MEAARGWDEEVMKWLAVAICLAMVGMAVMPAFQPLNLAFELYYGHHESLPITAASAAYEGIVITATLAAAAATAELVHLLLQQFL.

2 helical membrane-spanning segments follow: residues 13–35 and 59–81; these read KWLA…FQPL and EGIV…HLLL.

The protein localises to the cell membrane. This is an uncharacterized protein from Archaeoglobus fulgidus (strain ATCC 49558 / DSM 4304 / JCM 9628 / NBRC 100126 / VC-16).